Consider the following 171-residue polypeptide: uncharacterized protein (171 aa).

The segment at 139-171 is disordered; the sequence is ARKPTKSDDEEEEVGKMGGISSSINSWVQRQKL. Positions 158 to 171 are enriched in polar residues; sequence ISSSINSWVQRQKL.

This is an uncharacterized protein from Caenorhabditis elegans.